The sequence spans 345 residues: Homeobox protein DBX1 (345 aa).

Disordered stretches follow at residues 55–103 (PRGS…VSPA) and 241–345 (KERE…ITVS). Residues 182-241 (GMLRRAVFSDVQRKALEKMFQKQKYISKPDRKKLAAKLGLKDSQVKIWFQNRRMKWRNSK) constitute a DNA-binding region (homeobox). Over residues 300-309 (DPRHLRDPRL) the composition is skewed to basic and acidic residues. The segment covering 330–345 (SDSEDDEEGEEEITVS) has biased composition (acidic residues).

It belongs to the H2.0 homeobox family.

It localises to the nucleus. Functionally, could have a role in patterning the central nervous system during embryogenesis. Has a key role in regulating the distinct phenotypic features that distinguish two major classes of ventral interneurons, V0 and V1 neurons. Regulates the transcription factor profile, neurotransmitter phenotype, intraspinal migratory path and axonal trajectory of V0 neurons, features that differentiate them from an adjacent set of V1 neurons. This Bos taurus (Bovine) protein is Homeobox protein DBX1 (DBX1).